Reading from the N-terminus, the 322-residue chain is tRNA U34 carboxymethyltransferase (322 aa).

Residues Lys92, Trp106, Lys111, Gly131, 153–155 (DPT), 181–182 (VE), Met196, Tyr200, and Arg315 contribute to the carboxy-S-adenosyl-L-methionine site.

This sequence belongs to the class I-like SAM-binding methyltransferase superfamily. CmoB family. In terms of assembly, homotetramer.

The enzyme catalyses carboxy-S-adenosyl-L-methionine + 5-hydroxyuridine(34) in tRNA = 5-carboxymethoxyuridine(34) in tRNA + S-adenosyl-L-homocysteine + H(+). Its function is as follows. Catalyzes carboxymethyl transfer from carboxy-S-adenosyl-L-methionine (Cx-SAM) to 5-hydroxyuridine (ho5U) to form 5-carboxymethoxyuridine (cmo5U) at position 34 in tRNAs. This Colwellia psychrerythraea (strain 34H / ATCC BAA-681) (Vibrio psychroerythus) protein is tRNA U34 carboxymethyltransferase.